We begin with the raw amino-acid sequence, 209 residues long: MKTPLAPTKSNLAYVRDQLGLARDGYRLLEQKREILFMELTSLLEEVHLLETELDKRRKQAYASLWQLLLAQGRDDIAACALVTPVPCRVQQEVLLIAGLRFLRLDAVMQPPKLQYAALGSSACMDRAREDFGLLLQTLTRMASVQTIVWRLASEMRKTQRRVNALSKQIIPQMCETCMYIESVLEERDRESTFVLKSLKARKDPTTTL.

It belongs to the V-ATPase D subunit family.

Functionally, produces ATP from ADP in the presence of a proton gradient across the membrane. This is V-type ATP synthase subunit D 2 (atpD2) from Treponema pallidum (strain Nichols).